The following is a 62-amino-acid chain: uncharacterized protein (62 aa).

The protein localises to the plastid. The protein resides in the chloroplast. This is an uncharacterized protein from Porphyra purpurea (Red seaweed).